The chain runs to 524 residues: Pentatricopeptide repeat-containing protein At1g02150 (524 aa).

PPR repeat units follow at residues 168–202 (DRRVYGSLLNAYVRAKSREKAEALLNTMRDKGYAL), 203–237 (HPLPFNVMMTLYMNLREYDKVDAMVFEMKQKDIRL), 238–268 (DIYSYNIWLSSCGSLGSVEKMELVYQQMKSD), 274–304 (NWTTFSTMATMYIKMGETEKAEDALRKVEAR), 309–339 (NRIPYHYLLSLYGSLGNKKELYRVWHVYKSV), 344–378 (PNLGYHALVSSLVRMGDIEGAEKVYEEWLPVKSSY), and 379–413 (DPRIPNLLMNAYVKNDQLETAEGLFDHMVEMGGKP).

Belongs to the PPR family. P subfamily.

This chain is Pentatricopeptide repeat-containing protein At1g02150, found in Arabidopsis thaliana (Mouse-ear cress).